Reading from the N-terminus, the 443-residue chain is Ribosomal protein uS12 methylthiotransferase RimO (443 aa).

An MTTase N-terminal domain is found at 6–116; it reads PRVGMISLGC…VVNAVHDVVP (111 aa). 6 residues coordinate [4Fe-4S] cluster: Cys-15, Cys-51, Cys-80, Cys-149, Cys-153, and Cys-156. The 239-residue stretch at 135–373 folds into the Radical SAM core domain; sequence LTPRHYAYLK…MAHQQAISAA (239 aa). One can recognise a TRAM domain in the interval 376 to 443; the sequence is QMKIGKEIEV…DEYDLWAEML (68 aa).

This sequence belongs to the methylthiotransferase family. RimO subfamily. [4Fe-4S] cluster is required as a cofactor.

Its subcellular location is the cytoplasm. It carries out the reaction L-aspartate(89)-[ribosomal protein uS12]-hydrogen + (sulfur carrier)-SH + AH2 + 2 S-adenosyl-L-methionine = 3-methylsulfanyl-L-aspartate(89)-[ribosomal protein uS12]-hydrogen + (sulfur carrier)-H + 5'-deoxyadenosine + L-methionine + A + S-adenosyl-L-homocysteine + 2 H(+). Functionally, catalyzes the methylthiolation of an aspartic acid residue of ribosomal protein uS12. This chain is Ribosomal protein uS12 methylthiotransferase RimO, found in Pseudomonas syringae pv. tomato (strain ATCC BAA-871 / DC3000).